We begin with the raw amino-acid sequence, 408 residues long: Multidrug resistance protein MdtG (408 aa).

Helical transmembrane passes span 16–36 (LIVA…VMPF), 58–78 (IVFS…GGLA), 92–112 (LGMG…QFLI), 115–135 (ALLG…ATQV), 146–166 (TLST…GLLA), 173–193 (PVFF…LFCI), 224–244 (LFVT…ILTL), 256–276 (VAFI…LSAP), 290–310 (ILIT…YVQT), 319–339 (FLLG…LVYN), and 378–398 (AVFL…WNSL).

Belongs to the major facilitator superfamily. DHA1 family. MdtG (TC 2.A.1.2.20) subfamily.

Its subcellular location is the cell inner membrane. In terms of biological role, confers resistance to fosfomycin and deoxycholate. This is Multidrug resistance protein MdtG from Escherichia coli O6:K15:H31 (strain 536 / UPEC).